Reading from the N-terminus, the 211-residue chain is Ribosome maturation factor RimM (211 aa).

A PRC barrel domain is found at 111 to 182; the sequence is PDAWYDHQLV…TLVITPPLGL (72 aa). Residues 184-211 form a disordered region; the sequence is EEIPDEQPTPSATSDAEPGSAPEGDDAR.

It belongs to the RimM family. In terms of assembly, binds ribosomal protein uS19.

It is found in the cytoplasm. An accessory protein needed during the final step in the assembly of 30S ribosomal subunit, possibly for assembly of the head region. Essential for efficient processing of 16S rRNA. May be needed both before and after RbfA during the maturation of 16S rRNA. It has affinity for free ribosomal 30S subunits but not for 70S ribosomes. The sequence is that of Ribosome maturation factor RimM from Clavibacter sepedonicus (Clavibacter michiganensis subsp. sepedonicus).